Here is a 384-residue protein sequence, read N- to C-terminus: Anhydro-N-acetylmuramic acid kinase (384 aa).

9 to 16 (GTSADGVD) contacts ATP.

This sequence belongs to the anhydro-N-acetylmuramic acid kinase family.

It carries out the reaction 1,6-anhydro-N-acetyl-beta-muramate + ATP + H2O = N-acetyl-D-muramate 6-phosphate + ADP + H(+). Its pathway is amino-sugar metabolism; 1,6-anhydro-N-acetylmuramate degradation. The protein operates within cell wall biogenesis; peptidoglycan recycling. In terms of biological role, catalyzes the specific phosphorylation of 1,6-anhydro-N-acetylmuramic acid (anhMurNAc) with the simultaneous cleavage of the 1,6-anhydro ring, generating MurNAc-6-P. Is required for the utilization of anhMurNAc either imported from the medium or derived from its own cell wall murein, and thus plays a role in cell wall recycling. This is Anhydro-N-acetylmuramic acid kinase from Synechococcus sp. (strain CC9311).